Consider the following 231-residue polypeptide: Octanoyltransferase (231 aa).

A BPL/LPL catalytic domain is found at 49 to 227 (PHLPEAVWLL…ALAARFHLAW (179 aa)). Substrate contacts are provided by residues 91–98 (RGGEVTHH), 158–160 (AIG), and 171–173 (GLA). C189 (acyl-thioester intermediate) is an active-site residue.

Belongs to the LipB family.

Its subcellular location is the cytoplasm. The catalysed reaction is octanoyl-[ACP] + L-lysyl-[protein] = N(6)-octanoyl-L-lysyl-[protein] + holo-[ACP] + H(+). It functions in the pathway protein modification; protein lipoylation via endogenous pathway; protein N(6)-(lipoyl)lysine from octanoyl-[acyl-carrier-protein]: step 1/2. Its function is as follows. Catalyzes the transfer of endogenously produced octanoic acid from octanoyl-acyl-carrier-protein onto the lipoyl domains of lipoate-dependent enzymes. Lipoyl-ACP can also act as a substrate although octanoyl-ACP is likely to be the physiological substrate. In Parasynechococcus marenigrum (strain WH8102), this protein is Octanoyltransferase.